Here is a 397-residue protein sequence, read N- to C-terminus: Phosphoglycerate kinase (397 aa).

Residues 22 to 24 (DLN), Arg-37, 60 to 63 (HFGR), Arg-119, and Arg-152 each bind substrate. Residues Lys-202, Glu-324, and 354-357 (GGDT) contribute to the ATP site.

It belongs to the phosphoglycerate kinase family. As to quaternary structure, monomer.

It is found in the cytoplasm. The enzyme catalyses (2R)-3-phosphoglycerate + ATP = (2R)-3-phospho-glyceroyl phosphate + ADP. It participates in carbohydrate degradation; glycolysis; pyruvate from D-glyceraldehyde 3-phosphate: step 2/5. In Zymomonas mobilis subsp. mobilis (strain ATCC 31821 / ZM4 / CP4), this protein is Phosphoglycerate kinase (pgk).